The primary structure comprises 757 residues: Elongation factor G, mitochondrial (757 aa).

A mitochondrion-targeting transit peptide spans 1–41 (MLERAALLHRLRLPAHSLPFIYNGALFGGAKRSFSATSKRC). One can recognise a tr-type G domain in the interval 66–347 (KLLRNIGVSA…AIVDYLPEPS (282 aa)). GTP is bound by residues 75–82 (AHIDSGKT), 146–150 (DTPGH), and 200–203 (NKMD).

This sequence belongs to the TRAFAC class translation factor GTPase superfamily. Classic translation factor GTPase family. EF-G/EF-2 subfamily.

The protein resides in the mitochondrion. The protein operates within protein biosynthesis; polypeptide chain elongation. Functionally, mitochondrial GTPase that catalyzes the GTP-dependent ribosomal translocation step during translation elongation. During this step, the ribosome changes from the pre-translocational (PRE) to the post-translocational (POST) state as the newly formed A-site-bound peptidyl-tRNA and P-site-bound deacylated tRNA move to the P and E sites, respectively. Catalyzes the coordinated movement of the two tRNA molecules, the mRNA and conformational changes in the ribosome. This is Elongation factor G, mitochondrial from Eremothecium gossypii (strain ATCC 10895 / CBS 109.51 / FGSC 9923 / NRRL Y-1056) (Yeast).